Here is a 207-residue protein sequence, read N- to C-terminus: Putative 3-methyladenine DNA glycosylase (207 aa).

The protein belongs to the DNA glycosylase MPG family.

The protein is Putative 3-methyladenine DNA glycosylase of Burkholderia lata (strain ATCC 17760 / DSM 23089 / LMG 22485 / NCIMB 9086 / R18194 / 383).